The following is a 43-amino-acid chain: Phi-Lf prophage-derived putative minor coat protein (43 aa).

The chain is Phi-Lf prophage-derived putative minor coat protein (gVII-1) from Xanthomonas campestris pv. campestris (strain ATCC 33913 / DSM 3586 / NCPPB 528 / LMG 568 / P 25).